The primary structure comprises 383 residues: tRNA-specific 2-thiouridylase MnmA (383 aa).

ATP contacts are provided by residues 30 to 37 and Met-56; that span reads GMSGGVDS. An interaction with target base in tRNA region spans residues 116–118; sequence NPD. Catalysis depends on Cys-121, which acts as the Nucleophile. A disulfide bridge links Cys-121 with Cys-218. Residue Gly-146 participates in ATP binding. Residues 168–170 form an interaction with tRNA region; sequence KDQ. Cys-218 serves as the catalytic Cysteine persulfide intermediate. Residues 330 to 331 are interaction with tRNA; the sequence is RY.

It belongs to the MnmA/TRMU family.

It localises to the cytoplasm. It catalyses the reaction S-sulfanyl-L-cysteinyl-[protein] + uridine(34) in tRNA + AH2 + ATP = 2-thiouridine(34) in tRNA + L-cysteinyl-[protein] + A + AMP + diphosphate + H(+). In terms of biological role, catalyzes the 2-thiolation of uridine at the wobble position (U34) of tRNA, leading to the formation of s(2)U34. The sequence is that of tRNA-specific 2-thiouridylase MnmA from Haemophilus influenzae (strain 86-028NP).